A 263-amino-acid polypeptide reads, in one-letter code: Post-GPI attachment to proteins factor 2 (263 aa).

Helical transmembrane passes span 16-36 (FVIC…ILSL), 69-89 (YIWR…AIAF), 109-129 (FLCN…LALT), 143-163 (CFGG…WLFN), 180-200 (YKIL…YLYW), and 208-228 (PGIY…NIFF).

It belongs to the PGAP2 family.

The protein resides in the golgi apparatus membrane. The protein localises to the endoplasmic reticulum membrane. Involved in the lipid remodeling steps of GPI-anchor maturation. Required for stable expression of GPI-anchored proteins at the cell surface. The polypeptide is Post-GPI attachment to proteins factor 2 (Caenorhabditis elegans).